We begin with the raw amino-acid sequence, 579 residues long: V-type ATP synthase alpha chain (579 aa).

227-234 contacts ATP; that stretch reads GGFGTGKT.

This sequence belongs to the ATPase alpha/beta chains family.

The enzyme catalyses ATP + H2O + 4 H(+)(in) = ADP + phosphate + 5 H(+)(out). Produces ATP from ADP in the presence of a proton gradient across the membrane. The V-type alpha chain is a catalytic subunit. This is V-type ATP synthase alpha chain from Anaeromyxobacter dehalogenans (strain 2CP-C).